The primary structure comprises 235 residues: MSKNSKAYRAAAEKVDRSNLYTPLQAAKLAKETSSTKQDATVEVAIRLGVDPRKADQMVRGTVNLPHGTGKTARVAVFAVGEKADAAVAAGADIVGSDDLIEKIQGGFLDFDAAIATPDQMAKVGRIARVLGPRGLMPNPKTGTVTPDVAKAVADIKGGKINFRVDKQANLHFVIGKASFEENKLAENYGAAIDEVLRLKPSASKGRYLKKITVSTTTGPGIPVDPSVTRNFTEA.

Belongs to the universal ribosomal protein uL1 family. In terms of assembly, part of the 50S ribosomal subunit.

Its function is as follows. Binds directly to 23S rRNA. The L1 stalk is quite mobile in the ribosome, and is involved in E site tRNA release. Protein L1 is also a translational repressor protein, it controls the translation of the L11 operon by binding to its mRNA. The polypeptide is Large ribosomal subunit protein uL1 (Mycobacterium marinum (strain ATCC BAA-535 / M)).